Here is a 156-residue protein sequence, read N- to C-terminus: Melatonin receptor type 1A (156 aa).

The next 3 helical transmembrane spans lie at 19 to 39 (LCYVFLIWTLTLIAIMPNLQT), 62 to 82 (TIALVVFHFVVPMIIVTFCYL), and 115 to 135 (FVVFVLFALCWAPLNFIGLIV).

The protein belongs to the G-protein coupled receptor 1 family. As to expression, at least in the brain, more precisely in the pars tuberalis and the suprachiasmatic nucleus.

The protein resides in the cell membrane. Functionally, high affinity receptor for melatonin. Likely to mediate the reproductive and circadian actions of melatonin. The activity of this receptor is mediated by pertussis toxin sensitive G proteins that inhibit adenylate cyclase activity. Possibly involved in sleep induction, by melatonin activation of the potassium channel KCNMA1/BK and the dissociation of G-beta and G-gamma subunits, thereby decreasing synaptic transmission. In Rattus norvegicus (Rat), this protein is Melatonin receptor type 1A (Mtnr1a).